The sequence spans 121 residues: Large ribosomal subunit protein bL20 (121 aa).

This sequence belongs to the bacterial ribosomal protein bL20 family.

In terms of biological role, binds directly to 23S ribosomal RNA and is necessary for the in vitro assembly process of the 50S ribosomal subunit. It is not involved in the protein synthesizing functions of that subunit. The protein is Large ribosomal subunit protein bL20 of Methylorubrum extorquens (strain PA1) (Methylobacterium extorquens).